The chain runs to 1527 residues: Lysophospholipase nte1 (1527 aa).

Over Met1–Gly69 the chain is Cytoplasmic. Residues Trp70–Ile90 traverse the membrane as a helical segment. The Lumenal portion of the chain corresponds to Thr91 to Thr112. A helical membrane pass occupies residues Met113–Ile133. Topologically, residues Arg134–Ile1527 are cytoplasmic. Disordered regions lie at residues Ala240–Val259, Leu299–Ile387, Glu576–Arg596, and Ala750–Ser785. Positions His355–Thr373 are enriched in basic and acidic residues. Residues Gly685–Val804 and Arg846–Arg966 contribute to the a nucleoside 3',5'-cyclic phosphate site. Over residues Arg761–Ser771 the composition is skewed to low complexity. The 165-residue stretch at Leu1224–Lys1388 folds into the PNPLA domain. A GXGXXG motif is present at residues Gly1228–Gly1233. The GXSXG signature appears at Gly1255–Gly1259. Residue Ser1257 is the Nucleophile of the active site. The Proton acceptor role is filled by Asp1375. Residues Asp1375–Gly1377 carry the DGA/G motif.

This sequence belongs to the NTE family.

It localises to the endoplasmic reticulum membrane. The enzyme catalyses a 1-acyl-sn-glycero-3-phosphocholine + H2O = sn-glycerol 3-phosphocholine + a fatty acid + H(+). Its activity is regulated as follows. Inhibited by organophosphorus esters. Functionally, intracellular phospholipase B that catalyzes the double deacylation of phosphatidylcholine (PC) to glycerophosphocholine (GroPCho). Plays an important role in membrane lipid homeostasis. Responsible for the rapid PC turnover in response to inositol, elevated temperatures, or when choline is present in the growth medium. This Aspergillus terreus (strain NIH 2624 / FGSC A1156) protein is Lysophospholipase nte1 (nte1).